The following is a 441-amino-acid chain: COP9 signalosome complex subunit 1 (441 aa).

Residues 1–28 form a disordered region; sequence MERDEEASGPMMEMCTNGGEETSNRRPI. The region spanning 230 to 400 is the PCI domain; the sequence is KYKLAARKFL…KILYARHADQ (171 aa).

Belongs to the CSN1 family. In terms of assembly, component of the CSN complex, probably composed of CSN1, CSN2, CSN3, CSN4, CSN5 (CSN5A or CSN5B), CSN6 (CSN6A or CSN6B), CSN7 and CSN8. Interacts with itself and (via PCI domain) with CSN7 (via PCI domain). In the CSN complex, it probably interacts directly with CSN2, CSN3, CSN4 and CSN5B. Interacts with the 26S proteasome subunit RPN6. Interacts (via N-terminal domain) with TSA1 (via C-terminal domain). Binds to the translation initiation factors TIF3C1, TIF3E1 and TIF3H1. As to expression, expressed in leaves, flowers, immature siliques, and light-grown roots.

It localises to the cytoplasm. It is found in the nucleus. Its function is as follows. Component of the COP9 signalosome complex (CSN), a complex involved in various cellular and developmental processes such as photomorphogenesis and auxin and jasmonate responses. The CSN complex is an essential regulator of the ubiquitin (Ubl) conjugation pathway by mediating the deneddylation of the cullin subunits of SCF-type E3 ligase complexes, leading to decrease the Ubl ligase activity of SCF. It is involved in repression of photomorphogenesis in darkness by regulating the activity of COP1-containing Ubl ligase complexes. The complex is also required for degradation of IAA6 by regulating the activity of the Ubl ligase SCF-TIR complex. In the complex, it plays a central role in CSN assembly. The polypeptide is COP9 signalosome complex subunit 1 (CSN1) (Arabidopsis thaliana (Mouse-ear cress)).